The chain runs to 188 residues: GTPase KRas (188 aa).

GTP is bound by residues 10–18 (GAGGVGKSA), 29–35 (VDEYDPT), 59–60 (AG), and 116–119 (NKCD). The Effector region signature appears at 32-40 (YDPTIEDSY). The interval 168–188 (EKMSKDGKKKKKKTKTKCIIM) is disordered. Cysteine 185 bears the Cysteine methyl ester mark. A lipid anchor (S-farnesyl cysteine) is attached at cysteine 185. A propeptide spans 186–188 (IIM) (removed in mature form).

It belongs to the small GTPase superfamily. Ras family.

The protein resides in the cell membrane. The protein localises to the cytoplasm. The enzyme catalyses GTP + H2O = GDP + phosphate + H(+). With respect to regulation, alternates between an inactive form bound to GDP and an active form bound to GTP. Activated by a guanine nucleotide-exchange factor (GEF) and inactivated by a GTPase-activating protein (GAP). Its function is as follows. Ras proteins bind GDP/GTP and possess intrinsic GTPase activity. Plays an important role in the regulation of cell proliferation. May play a role in promoting oncogenic events by inducing transcriptional silencing of tumor suppressor genes (TSGs). This chain is GTPase KRas (KRAS), found in Meleagris gallopavo (Wild turkey).